The chain runs to 240 residues: MNKNVVIKSLAALTILTSVTGIGITLVEEVQQTAKAENNVTKVKDTNIFPYTGVVAFKSATGFVVGKNTILTNKHVSKNYKVGDRITAHPNSDKGNGGIYSIKKIINYPGKEDVSVIQVEERAIERGPKGFNFNDNVTPFKYAAGAKAGERIKVIGYPHPYKNKYVLYESTGPVMSVEGSSIVYSAHTESGNSGSPVLNSNNELVGIHFASDVKNDDNRNAYGVYFTPEIKKFIAENIDK.

The signal sequence occupies residues 1 to 36 (MNKNVVIKSLAALTILTSVTGIGITLVEEVQQTAKA). Residues H75, D113, and S193 each act as charge relay system in the active site.

The protein belongs to the peptidase S1B family.

The protein resides in the secreted. Functionally, serine protease that cleaves specifically after the sequence Trp-Glu-Leu-Gln. This Staphylococcus aureus (strain MW2) protein is Serine protease SplB (splB).